We begin with the raw amino-acid sequence, 2871 residues long: Fibrillin-1 (2871 aa).

The N-terminal stretch at 1–24 (MRRGGLLEVALGFTVLLASYTSHG) is a signal peptide. Residues 25–44 (ADTNLEAGNVKETRANRAKR) constitute a propeptide that is removed on maturation. The tract at residues 45–81 (RGGGGHDALKGPNVCGSRYNAYCCPGWKTLPGGNQCI) is fibrillin unique N-terminal (FUN) domain. Residues 45–450 (RGGGGHDALK…PPRVLPVNVT (406 aa)) are N-terminal domain. Disulfide bonds link cysteine 59–cysteine 68, cysteine 67–cysteine 80, cysteine 85–cysteine 94, cysteine 89–cysteine 100, cysteine 102–cysteine 111, cysteine 119–cysteine 129, cysteine 123–cysteine 134, cysteine 136–cysteine 145, cysteine 150–cysteine 160, cysteine 154–cysteine 166, and cysteine 168–cysteine 177. EGF-like domains are found at residues 81 to 112 (IVPICRHSCGDGFCSRPNMCTCPSGQIAPSCG), 115 to 146 (SIQHCNIRCMNGGSCSDDHCLCQKGYIGTHCG), and 147 to 178 (QPVCESGCLNGGRCVAPNRCACTYGFTGPQCE). The tract at residues 119-329 (CNIRCMNGGS…YTSPDGTRCI (211 aa)) is interaction with MFAP4. Residues 184–236 (GPCFTVISNQMCQGQLSGIVCTKTLCCATVGRAWGHPCEMCPAQPHPCRRGFI) form the TB 1 domain. The interval 195-221 (CQGQLSGIVCTKTLCCATVGRAWGHPC) is hybrid domain 1. The 42-residue stretch at 246-287 (DVDECQAIPGLCQGGNCINTVGSFECKCPAGHKFNEVSQKCE) folds into the EGF-like 4; calcium-binding domain. 6 cysteine pairs are disulfide-bonded: cysteine 250–cysteine 262, cysteine 257–cysteine 271, cysteine 273–cysteine 286, cysteine 292–cysteine 304, cysteine 299–cysteine 313, and cysteine 315–cysteine 328. O-linked (Glc) serine glycosylation occurs at serine 268. An EGF-like 5; calcium-binding domain is found at 288–329 (DIDECSTIPGICDGGECTNTVSSYFCKCPPGFYTSPDGTRCI). The TB 2 domain occupies 334-389 (GYCYTALANGRCSNQLPQSITKMQCCCDVGRCWSPGVTVAPEMCPIRATEDFNKLC). An N-linked (GlcNAc...) asparagine glycan is attached at asparagine 448. The region spanning 449-489 (VTDYCQLFRYLCQNGRCIPTPGSYRCECNKGFQLDLRGECI) is the EGF-like 6 domain. Disulfide bonds link cysteine 453-cysteine 465, cysteine 460-cysteine 474, cysteine 476-cysteine 488, cysteine 494-cysteine 504, cysteine 499-cysteine 513, cysteine 515-cysteine 528, cysteine 534-cysteine 546, cysteine 541-cysteine 555, cysteine 557-cysteine 570, cysteine 576-cysteine 587, cysteine 582-cysteine 596, cysteine 598-cysteine 611, cysteine 617-cysteine 628, cysteine 623-cysteine 637, and cysteine 639-cysteine 652. O-linked (Glc) serine glycosylation is present at serine 471. The EGF-like 7; calcium-binding domain maps to 490–529 (DVDECEKNPCAGGECINTQGSYTCQCRPGYQSTLTRTECR). Serine 510 is a glycosylation site (O-linked (Glc) serine). The region spanning 530 to 571 (DIDECLQNGRICNNGRCINTDGSFHCVCNAGFHVTRDGKNCE) is the EGF-like 8; calcium-binding domain. The EGF-like 9; calcium-binding domain maps to 572-612 (DMDECSIRNMCLNGMCINEDGSFKCICKPGFQLASDGRYCK). The EGF-like 10; calcium-binding domain maps to 613-653 (DINECETPGICMNGRCVNTDGSYRCECFPGLAVGLDGRVCV). The TB 3 domain occupies 659 to 711 (STCYGGYKRGQCVKPLFGAVTKSECCCASTEYAFGEPCQPCPSQNSAEYQALC). One can recognise an EGF-like 11; calcium-binding domain in the interval 723-764 (DINECALDPDICPNGICENLRGTYKCICNSGYEVDSTGKNCV). Cystine bridges form between cysteine 727-cysteine 739, cysteine 734-cysteine 748, cysteine 750-cysteine 763, cysteine 769-cysteine 781, cysteine 776-cysteine 790, cysteine 792-cysteine 805, cysteine 811-cysteine 821, cysteine 816-cysteine 830, cysteine 832-cysteine 845, cysteine 853-cysteine 875, cysteine 862-cysteine 887, cysteine 876-cysteine 890, cysteine 896-cysteine 908, cysteine 914-cysteine 926, cysteine 921-cysteine 935, and cysteine 937-cysteine 950. One can recognise an EGF-like 12; calcium-binding domain in the interval 765 to 806 (DINECVLNSLLCDNGQCRNTPGSFVCTCPKGFIYKPELKTCE). The 40-residue stretch at 807–846 (DIDECESSPCINGVCKNSPGSFICECSSESTLDPTKTICI) folds into the EGF-like 13; calcium-binding domain. The 52-residue stretch at 851–902 (GTCWQTVIDGRCEININGATLKSQCCSSLGAAWGSPCTPCQVDPICGKGYSR) folds into the TB 4 domain. A hybrid domain 2 region spans residues 862-887 (CEININGATLKSQCCSSLGAAWGSPC). In terms of domain architecture, EGF-like 14; calcium-binding spans 910–951 (DIDECEVFPGVCKNGLCVNSKGSFKCQCPSGMTLDATGRICL). The 53-residue stretch at 956 to 1008 (ETCFLRYEDEECTLPVAGRHRMDACCCSVGAAWGTEECEECPVRNTPEYEELC) folds into the TB 5 domain. The EGF-like 15; calcium-binding domain occupies 1028-1069 (DINECKMIPNLCTHGKCRNTIGSFKCRCDSGFALDSEERNCT). Intrachain disulfides connect cysteine 1032–cysteine 1044, cysteine 1039–cysteine 1053, cysteine 1055–cysteine 1068, cysteine 1074–cysteine 1086, cysteine 1081–cysteine 1095, cysteine 1097–cysteine 1111, cysteine 1117–cysteine 1129, cysteine 1124–cysteine 1138, cysteine 1140–cysteine 1153, cysteine 1159–cysteine 1171, cysteine 1166–cysteine 1180, cysteine 1182–cysteine 1195, cysteine 1201–cysteine 1212, cysteine 1208–cysteine 1221, cysteine 1223–cysteine 1236, cysteine 1242–cysteine 1254, cysteine 1249–cysteine 1263, cysteine 1265–cysteine 1278, cysteine 1284–cysteine 1296, cysteine 1291–cysteine 1305, cysteine 1307–cysteine 1320, cysteine 1326–cysteine 1339, cysteine 1333–cysteine 1348, cysteine 1350–cysteine 1361, cysteine 1367–cysteine 1380, cysteine 1374–cysteine 1389, cysteine 1391–cysteine 1402, cysteine 1408–cysteine 1420, cysteine 1415–cysteine 1429, cysteine 1431–cysteine 1444, cysteine 1450–cysteine 1461, cysteine 1456–cysteine 1470, cysteine 1472–cysteine 1485, cysteine 1491–cysteine 1502, cysteine 1497–cysteine 1511, cysteine 1513–cysteine 1526, cysteine 1534–cysteine 1562, cysteine 1549–cysteine 1574, cysteine 1563–cysteine 1577, cysteine 1564–cysteine 1589, cysteine 1610–cysteine 1622, cysteine 1617–cysteine 1631, cysteine 1633–cysteine 1646, cysteine 1652–cysteine 1663, cysteine 1658–cysteine 1672, and cysteine 1674–cysteine 1687. An N-linked (GlcNAc...) asparagine glycan is attached at asparagine 1067. One can recognise an EGF-like 16; calcium-binding domain in the interval 1070 to 1112 (DIDECRISPDLCGRGQCVNTPGDFECKCDEGYESGFMMMKNCM). An EGF-like 17; calcium-binding domain is found at 1113–1154 (DIDECQRDPLLCRGGVCLNTEGSYRCECPPGHQLAPNISACI). An O-linked (Glc) serine glycan is attached at serine 1135. Residue asparagine 1149 is glycosylated (N-linked (GlcNAc...) asparagine). One can recognise an EGF-like 18; calcium-binding domain in the interval 1155–1196 (DINECELSAHLCPHGRCVNLIGKYQCACNPGYHSTPDRLFCV). Positions 1197-1237 (DIDECSIMNGGCETFCTNSEGSYECSCQPGFALMPDQRSCT) constitute an EGF-like 19; calcium-binding domain. An O-linked (Glc) serine glycan is attached at serine 1218. Positions 1238-1279 (DIDECEDNPNICDGGQCTNIPGEYRCLCYDGFMASEDMKTCV) constitute an EGF-like 20; calcium-binding domain. In terms of domain architecture, EGF-like 21; calcium-binding spans 1280 to 1321 (DVNECDLNPNICLSGTCENTKGSFICHCDMGYSGKKGKTGCT). O-linked (Glc) serine glycosylation occurs at serine 1302. An EGF-like 22; calcium-binding domain is found at 1322–1362 (DINECEIGAHNCDRHAVCTNTAGSFKCSCSPGWIGDGIKCT). Serine 1345 carries an O-linked (Glc) serine glycan. Residues 1363–1403 (DLDECSNGTHMCSQHADCKNTMGSYRCLCKEGYTGDGFTCT) enclose the EGF-like 23; calcium-binding domain. A glycan (N-linked (GlcNAc...) asparagine) is linked at asparagine 1369. Serine 1386 carries an O-linked (Glc) serine glycan. The EGF-like 24; calcium-binding domain occupies 1404–1445 (DLDECSENLNLCGNGQCLNAPGGYRCECDMGFVPSADGKACE). One can recognise an EGF-like 25; calcium-binding domain in the interval 1446–1486 (DIDECSLPNICVFGTCHNLPGLFRCECEIGYELDRSGGNCT). Asparagine 1484 carries an N-linked (GlcNAc...) asparagine glycan. One can recognise an EGF-like 26; calcium-binding domain in the interval 1487-1527 (DVNECLDPTTCISGNCVNTPGSYTCDCPPDFELNPTRVGCV). The O-linked (Glc) serine glycan is linked to serine 1508. A C-terminal domain region spans residues 1528-2731 (DTRSGNCYLD…GYPKRGRKRR (1204 aa)). One can recognise a TB 6 domain in the interval 1532–1589 (GNCYLDIRPRGDNGDTACSNEIGVGVSKASCCCSLGKAWGTPCELCPPVNTSEYKILC). Residues 1541–1543 (RGD) carry the Cell attachment site motif. Asparagine 1581 carries N-linked (GlcNAc...) asparagine glycosylation. The 42-residue stretch at 1606 to 1647 (DIDECQELPGLCQGGKCINTFGSFQCRCPTGYYLNEDTRVCD) folds into the EGF-like 27; calcium-binding domain. Serine 1628 is a glycosylation site (O-linked (Glc) serine). An EGF-like 28; calcium-binding domain is found at 1648-1688 (DVNECETPGICGPGTCYNTVGNYTCICPPDYMQVNGGNNCM). Asparagine 1669 is a glycosylation site (N-linked (GlcNAc...) asparagine). In terms of domain architecture, TB 7 spans 1693–1748 (SLCYRNYYADNQTCDGELLFNMTKKMCCCSYNIGRAWNKPCEQCPIPSTDEFATLC). N-linked (GlcNAc...) asparagine glycans are attached at residues asparagine 1703 and asparagine 1713. The region spanning 1766–1807 (DIDECREIPGVCENGVCINMVGSFRCECPVGFFYNDKLLVCE) is the EGF-like 29; calcium-binding domain. 40 cysteine pairs are disulfide-bonded: cysteine 1770/cysteine 1782, cysteine 1777/cysteine 1791, cysteine 1793/cysteine 1806, cysteine 1812/cysteine 1824, cysteine 1818/cysteine 1833, cysteine 1835/cysteine 1847, cysteine 1853/cysteine 1865, cysteine 1860/cysteine 1874, cysteine 1876/cysteine 1889, cysteine 1895/cysteine 1905, cysteine 1900/cysteine 1914, cysteine 1916/cysteine 1928, cysteine 1934/cysteine 1947, cysteine 1942/cysteine 1956, cysteine 1958/cysteine 1971, cysteine 1977/cysteine 1989, cysteine 1984/cysteine 1998, cysteine 2000/cysteine 2011, cysteine 2017/cysteine 2029, cysteine 2024/cysteine 2038, cysteine 2040/cysteine 2053, cysteine 2061/cysteine 2083, cysteine 2070/cysteine 2096, cysteine 2084/cysteine 2099, cysteine 2085/cysteine 2111, cysteine 2131/cysteine 2142, cysteine 2137/cysteine 2151, cysteine 2153/cysteine 2164, cysteine 2170/cysteine 2181, cysteine 2176/cysteine 2190, cysteine 2192/cysteine 2204, cysteine 2210/cysteine 2221, cysteine 2217/cysteine 2230, cysteine 2232/cysteine 2245, cysteine 2251/cysteine 2265, cysteine 2258/cysteine 2274, cysteine 2276/cysteine 2289, cysteine 2295/cysteine 2307, cysteine 2302/cysteine 2316, and cysteine 2318/cysteine 2331. The region spanning 1808-1848 (DIDECQNGPVCQRNAECINTAGSYRCDCKPGYRFTSTGQCN) is the EGF-like 30; calcium-binding domain. An O-linked (Glc) serine glycan is attached at serine 1830. Residues 1849–1890 (DRNECQEIPNICSHGQCIDTVGSFYCLCHTGFKTNADQTMCL) form the EGF-like 31; calcium-binding domain. Serine 1871 carries an O-linked (Glc) serine glycan. The region spanning 1891–1929 (DINECERDACGNGTCRNTIGSFNCRCNHGFILSHNNDCI) is the EGF-like 32; calcium-binding domain. The N-linked (GlcNAc...) asparagine glycan is linked to asparagine 1902. An O-linked (Glc) serine glycan is attached at serine 1911. In terms of domain architecture, EGF-like 33; calcium-binding spans 1930-1972 (DVDECATGNGNLCRNGQCINTVGSFQCQCNEGYEVAPDGRTCV). The O-linked (Glc) serine glycan is linked to serine 1953. In terms of domain architecture, EGF-like 34; calcium-binding spans 1973-2012 (DINECLLDPRKCAPGTCQNLDGSYRCICPPGYSLQNDKCE). An EGF-like 35; calcium-binding domain is found at 2013–2054 (DIDECVEEPEICALGTCSNTEGSFKCLCPDGFSLSSTGRRCQ). Serine 2035 is a glycosylation site (O-linked (Glc) serine). The 53-residue stretch at 2059–2111 (SYCYAKFEGGKCSSPKSRNHSKQECCCALKGEGWGDPCELCPTEPDEAFRQIC) folds into the TB 8 domain. Asparagine 2077 carries an N-linked (GlcNAc...) asparagine glycan. Residues 2127 to 2165 (DMDECKEPDVCKHGQCINTDGSYRCECPFGYILQGNECV) enclose the EGF-like 36; calcium-binding domain. O-linked (Glc) serine glycosylation is present at serine 2148. Residues 2166-2205 (DTDECSVGNPCGNGTCKNVIGGFECTCEEGFEPGPMMTCE) form the EGF-like 37; calcium-binding domain. Asparagine 2178 carries an N-linked (GlcNAc...) asparagine glycan. One can recognise an EGF-like 38; calcium-binding domain in the interval 2206–2246 (DINECAQNPLLCAFRCVNTYGSYECKCPAGYVLREDRRMCK). A glycan (O-linked (Glc) serine) is linked at serine 2227. The EGF-like 39; calcium-binding domain occupies 2247 to 2290 (DEDECEEGKHDCAEKQMECKNLIGTYLCICGPGYQRRPDGEGCV). The 42-residue stretch at 2291-2332 (DENECQTKPGICENGRCLNTRGSYTCECNDGFTASPNQDECL) folds into the EGF-like 40; calcium-binding domain. A glycan (O-linked (Glc) serine) is linked at serine 2313. A TB 9 domain is found at 2337-2390 (GYCFTEVLQNMCQIGSSNRNPVTKSECCCDGGRGWGPHCEICPFQGTVAFKKLC). Residues 2402 to 2443 (DIDECKVIHDVCRNGECVNDRGSYHCICKTGYTPDITGTACV) form the EGF-like 41; calcium-binding domain. Cystine bridges form between cysteine 2406–cysteine 2418, cysteine 2413–cysteine 2427, cysteine 2429–cysteine 2442, cysteine 2448–cysteine 2459, cysteine 2455–cysteine 2468, cysteine 2470–cysteine 2483, cysteine 2489–cysteine 2500, cysteine 2496–cysteine 2509, cysteine 2511–cysteine 2522, cysteine 2528–cysteine 2541, cysteine 2535–cysteine 2550, cysteine 2552–cysteine 2565, cysteine 2571–cysteine 2581, cysteine 2577–cysteine 2590, cysteine 2592–cysteine 2605, cysteine 2611–cysteine 2622, cysteine 2617–cysteine 2631, cysteine 2633–cysteine 2646, cysteine 2652–cysteine 2663, cysteine 2659–cysteine 2672, and cysteine 2674–cysteine 2686. Residues 2444-2484 (DLNECNQAPKPCNFICKNTEGSYQCSCPKGYILQEDGRSCK) form the EGF-like 42; calcium-binding domain. O-linked (Glc) serine glycosylation occurs at serine 2465. An EGF-like 43; calcium-binding domain is found at 2485–2523 (DLDECATKQHNCQFLCVNTIGSFTCKCPPGFTQHHTACI). Residues 2524-2566 (DNNECTSDINLCGSKGICQNTPGSFTCECQRGFSLDPSGASCE) enclose the EGF-like 44; calcium-binding domain. O-linked (Glc) serine glycosylation is present at serine 2547. The EGF-like 45; calcium-binding domain occupies 2567–2606 (DVDECEGNHRCQHGCQNIIGGYRCSCPQGYLQHYQWNQCV). The 41-residue stretch at 2607-2647 (DENECLSAHICGGASCHNTLGSYKCMCPAGFQYEQFSGGCQ) folds into the EGF-like 46; calcium-binding domain. O-linked (Glc) serine glycosylation occurs at serine 2628. The EGF-like 47; calcium-binding domain occupies 2648–2687 (DINECGSAQAPCSYGCSNTEGGYLCACPPGYFRIGQGHCV). A phosphoserine mark is found at serine 2702 and serine 2709. N-linked (GlcNAc...) asparagine glycosylation is found at asparagine 2734, asparagine 2750, and asparagine 2767.

Belongs to the fibrillin family. In terms of assembly, interacts with COL16A1. Interacts with integrin alpha-V/beta-3. Interacts with ADAMTS10; this interaction promotes microfibril assembly. Interacts with THSD4; this interaction promotes fibril formation. Interacts (via N-terminal domain) with FBLN2 and FBLN5. Interacts with ELN. Forms a ternary complex with ELN and FBLN2 or FBLN5 and a significant interaction with ELN seen only in the presence of FBLN2 or FBLN5. Interacts (via N-terminal domain) with LTBP2 (via C-terminal domain) in a Ca(+2)-dependent manner. Interacts (via N-terminal domain) with LTBP1 (via C-terminal domain). Interacts with integrins ITGA5:ITGB1, ITGAV:ITGB3 and ITGAV:ITGB6. Interacts (via N-terminal domain) with BMP2, BMP4, BMP7, BMP10 and GDF5. Interacts (via N-terminal domain) with MFAP2 and MFAP5. Interacts with ADAMTSL5. Interacts with MFAP4. Interacts (via N-terminal domain) with TNFSF11 in a Ca(+2)-dependent manner. Interacts (via N-terminal domain) with EFEMP2; this interaction inhibits EFEMP2 binding to LOX and ELN. In terms of processing, cleavage of N- and C-terminus by furin is required for incorporation into the extracellular matrix and assembly into microfibrils. The C-terminus, which corresponds to the Asprosin chain, was initially thought to constitute a propeptide. Fibrillin-1 and Asprosin chains are still linked together during the secretion from cells, but are subsequently separated by furin, an essential step for incorporation of Fibrillin-1 into the nascent microfibrils. Forms intermolecular disulfide bonds either with other fibrillin-1 molecules or with other components of the microfibrils. Post-translationally, O-glycosylated on serine residues by POGLUT2 and POGLUT3 which is necessary for efficient protein secretion.

It localises to the secreted. The protein resides in the extracellular space. Its subcellular location is the extracellular matrix. Its function is as follows. Structural component of the 10-12 nm diameter microfibrils of the extracellular matrix, which conveys both structural and regulatory properties to load-bearing connective tissues. Fibrillin-1-containing microfibrils provide long-term force bearing structural support. In tissues such as the lung, blood vessels and skin, microfibrils form the periphery of the elastic fiber, acting as a scaffold for the deposition of elastin. In addition, microfibrils can occur as elastin-independent networks in tissues such as the ciliary zonule, tendon, cornea and glomerulus where they provide tensile strength and have anchoring roles. Fibrillin-1 also plays a key role in tissue homeostasis through specific interactions with growth factors, such as the bone morphogenetic proteins (BMPs), growth and differentiation factors (GDFs) and latent transforming growth factor-beta-binding proteins (LTBPs), cell-surface integrins and other extracellular matrix protein and proteoglycan components. Regulates osteoblast maturation by controlling TGF-beta bioavailability and calibrating TGF-beta and BMP levels, respectively. Negatively regulates osteoclastogenesis by binding and sequestering an osteoclast differentiation and activation factor TNFSF11. This leads to disruption of TNFSF11-induced Ca(2+) signaling and impairment of TNFSF11-mediated nuclear translocation and activation of transcription factor NFATC1 which regulates genes important for osteoclast differentiation and function. Mediates cell adhesion via its binding to cell surface receptors integrins ITGAV:ITGB3 and ITGA5:ITGB1. Binds heparin and this interaction plays an important role in the assembly of microfibrils. Hormone that targets the liver to increase plasma glucose levels. Secreted by white adipose tissue and circulates in the plasma. Acts in response to fasting and promotes blood glucose elevation by binding to the surface of hepatocytes. Promotes hepatocyte glucose release by activating the protein kinase A activity in the liver, resulting in rapid glucose release into the circulation. This Bos taurus (Bovine) protein is Fibrillin-1.